We begin with the raw amino-acid sequence, 781 residues long: Matrix non-peptidase homolog 1 (781 aa).

A signal peptide spans 1 to 27 (MTPPPASPSKKAKSSWLLIALIAVIIG). The N-linked (GlcNAc...) asparagine glycan is linked to N54. The segment covering 63 to 94 (TSKATVSTTTTQSATTPSTTTTRIEETTTTTS) has biased composition (low complexity). The disordered stretch occupies residues 63–113 (TSKATVSTTTTQSATTPSTTTTRIEETTTTTSGAFDESVKNSEASTSTIPT). Residues N183, N341, N375, and N520 are each glycosylated (N-linked (GlcNAc...) asparagine).

The protein is Matrix non-peptidase homolog 1 (mnp-1) of Caenorhabditis elegans.